Reading from the N-terminus, the 515-residue chain is Membrane-bound lytic murein transglycosylase F (515 aa).

The signal sequence occupies residues 1-32 (MKKLKINYLFIGILTLLLAAALWPSIPWFGKA). Residues 33–269 (DNRIAAIQSR…RMEEKYLGHG (237 aa)) form a non-LT domain region. Residues 270–515 (DDFDYVDTRT…PFSLKKKDEN (246 aa)) form an LT domain region. Glutamate 314 is an active-site residue. The interval 493-515 (QPSSNYLSHSPSLPFSLKKKDEN) is disordered.

In the N-terminal section; belongs to the bacterial solute-binding protein 3 family. The protein in the C-terminal section; belongs to the transglycosylase Slt family.

It is found in the cell outer membrane. The catalysed reaction is Exolytic cleavage of the (1-&gt;4)-beta-glycosidic linkage between N-acetylmuramic acid (MurNAc) and N-acetylglucosamine (GlcNAc) residues in peptidoglycan, from either the reducing or the non-reducing ends of the peptidoglycan chains, with concomitant formation of a 1,6-anhydrobond in the MurNAc residue.. Its function is as follows. Murein-degrading enzyme that degrades murein glycan strands and insoluble, high-molecular weight murein sacculi, with the concomitant formation of a 1,6-anhydromuramoyl product. Lytic transglycosylases (LTs) play an integral role in the metabolism of the peptidoglycan (PG) sacculus. Their lytic action creates space within the PG sacculus to allow for its expansion as well as for the insertion of various structures such as secretion systems and flagella. The chain is Membrane-bound lytic murein transglycosylase F from Citrobacter koseri (strain ATCC BAA-895 / CDC 4225-83 / SGSC4696).